The chain runs to 381 residues: F-box/LRR-repeat protein At4g14103 (381 aa).

The F-box domain occupies 7-60 (RDVISSLPDDISSHILSFLPTKEAASTSVLSKKWRYLFAFVPNLDLDDSVYLNP). LRR repeat units lie at residues 118 to 146 (DLHLNLESEFLLPSQVYLCKTLVWLKLRF), 171 to 196 (HFEEHGVGLTKLLSGCPMLEDLVLDD), 218 to 243 (SWQERDEFPKSVLLDTPNLVYLKFTD), 249 to 274 (YPKVNLDSLVEAHIDLRLLKPLLINY), 299 to 330 (TLYLSANTLQVLTYSCDAIPIFNNLTHLTIES), and 331 to 356 (NPRVGWQSVPGLLKNSPNLETLIFQG).

In Arabidopsis thaliana (Mouse-ear cress), this protein is F-box/LRR-repeat protein At4g14103.